The following is a 162-amino-acid chain: Ecotin (162 aa).

The N-terminal stretch at 1 to 18 (MKMFVPAVVFAASASAWA) is a signal peptide. A disulfide bridge links Cys-70 with Cys-107.

This sequence belongs to the protease inhibitor I11 (ecotin) family. In terms of assembly, homodimer.

It is found in the periplasm. General inhibitor of pancreatic serine proteases: inhibits chymotrypsin, trypsin, elastases, factor X, kallikrein as well as a variety of other proteases. The chain is Ecotin from Salmonella arizonae (strain ATCC BAA-731 / CDC346-86 / RSK2980).